The sequence spans 864 residues: Probable beta-glucosidase J (864 aa).

Residue Asp-233 is part of the active site. Residues Thr-411 to Val-578 form the PA14 domain. N-linked (GlcNAc...) asparagine glycans are attached at residues Asn-434, Asn-447, and Asn-503.

Belongs to the glycosyl hydrolase 3 family.

It is found in the secreted. The catalysed reaction is Hydrolysis of terminal, non-reducing beta-D-glucosyl residues with release of beta-D-glucose.. It functions in the pathway glycan metabolism; cellulose degradation. In terms of biological role, beta-glucosidases are one of a number of cellulolytic enzymes involved in the degradation of cellulosic biomass. Catalyzes the last step releasing glucose from the inhibitory cellobiose. The sequence is that of Probable beta-glucosidase J (bglJ) from Neosartorya fischeri (strain ATCC 1020 / DSM 3700 / CBS 544.65 / FGSC A1164 / JCM 1740 / NRRL 181 / WB 181) (Aspergillus fischerianus).